The sequence spans 85 residues: Beta-toxin BmKAS (85 aa).

An N-terminal signal peptide occupies residues Met-1 to Thr-19. The LCN-type CS-alpha/beta domain occupies Asp-20–Asn-82. 4 cysteine pairs are disulfide-bonded: Cys-31/Cys-81, Cys-35/Cys-56, Cys-42/Cys-63, and Cys-46/Cys-65.

As to expression, expressed by the venom gland.

The protein resides in the secreted. Beta toxins bind voltage-independently at site-4 of sodium channels (Nav) and shift the voltage of activation toward more negative potentials thereby affecting sodium channel activation and promoting spontaneous and repetitive firing. It binds to distinct receptor sites of mammal and insect voltage-gated sodium channels. It displays antinociceptive effect in rat models, which is due to its specific modulation of sodium channels of sensory neurons. It also significantly stimulates the binding of [3H]-ryanodine to ryanodine receptors on the sarcoplasmic reticulum of the skeletal muscle through an indirect mechanism. And it promotes noradrenaline release from the rat hippocampus slice. This chain is Beta-toxin BmKAS, found in Olivierus martensii (Manchurian scorpion).